The following is a 66-amino-acid chain: Cold shock-like protein (66 aa).

Residues 3-62 (GKVKWFDSKKGYGFITKDEGGDVFVHWSAIEMEGFKTLKEGQVVEFEIQEGKKGPQAAHV) form the CSD domain.

Monomer.

The protein resides in the cytoplasm. The polypeptide is Cold shock-like protein (csp) (Thermotoga maritima (strain ATCC 43589 / DSM 3109 / JCM 10099 / NBRC 100826 / MSB8)).